A 748-amino-acid chain; its full sequence is MTDTSDARPPHSDAKTASNSESENPAIDSPEPKSHAPLTNRDWWPEQVDVSVLHKQNEKGNPFGEDFDYAAEFAKLDVDAFKADVIDLIRTSQDWWPADYGNYAGLFVRMSWHAAGTYRIFDGRGGAGQGSQRFAPLNSWPDNANLDKARRLLWPIKQKYGNKISWADLIAYAGNAALEQSGFKTAGFAFGREDIWEPEEMLWGQEDTWLGTDKRYGGSNDDKRELAEPFGATTMGLIYVNPEGPEGKPDPLAAAHDIRETFGRMAMNDEETAALIVGGHTLGKTHGAADVNVGPEPEGAPMEQQGLGWKCPFGTGNGNDTVTSGLEVIWTGTNSQWSNAFLENLYGNEWELTKSPAGAWQFEAKNAEATIPDPFGGPPRKPTMLVTDVAMREDPIYGQITRRWLDHPEEMDAAFAKAWFKLMHRDMGPVSRYLGPWVPAEQEIWQDPVPAVDHALIDESDIAALKSQVLQSGLSVPQLVKTAWASAASFRGTDKRGGANGARLRLEPQRNWEANEPAELDKVLPVLEKIQQDFNSTATGGKKVSLADVIVLAGSAAVEKAAKDGGYEITVHFAPGRTDATQESTDVESFAVLEPRTDGFRNFFRPGDKNPLEQQLVERAYLLDLTAPELTALIGGLRALGANHGGSKHGVFTDKPGVLSNDFFLNLLDMRTEWKPSELSENVFDGKDRATGETKWTATANDLVFGSNSVLRALAEVYAQDDNQGKFVEDFVAAWVKVMNNDRFDLKQ.

Positions Met-1–Ala-14 are enriched in basic and acidic residues. The interval Met-1–Asn-40 is disordered. The segment at residues Trp-112–Tyr-239 is a cross-link (tryptophyl-tyrosyl-methioninium (Trp-Tyr) (with M-265)). The active-site Proton acceptor is His-113. The segment at residues Tyr-239–Met-265 is a cross-link (tryptophyl-tyrosyl-methioninium (Tyr-Met) (with W-112)). His-280 contacts heme b.

The protein belongs to the peroxidase family. Peroxidase/catalase subfamily. Homodimer or homotetramer. Heme b is required as a cofactor. Post-translationally, formation of the three residue Trp-Tyr-Met cross-link is important for the catalase, but not the peroxidase activity of the enzyme.

It catalyses the reaction H2O2 + AH2 = A + 2 H2O. The catalysed reaction is 2 H2O2 = O2 + 2 H2O. Its function is as follows. Bifunctional enzyme with both catalase and broad-spectrum peroxidase activity. The protein is Catalase-peroxidase of Mycolicibacterium gilvum (strain PYR-GCK) (Mycobacterium gilvum (strain PYR-GCK)).